We begin with the raw amino-acid sequence, 281 residues long: Small ribosomal subunit protein uS2 (281 aa).

The protein belongs to the universal ribosomal protein uS2 family.

The polypeptide is Small ribosomal subunit protein uS2 (rpsB) (Chlamydia muridarum (strain MoPn / Nigg)).